A 257-amino-acid chain; its full sequence is Imidazole glycerol phosphate synthase subunit HisF (257 aa).

Catalysis depends on residues aspartate 12 and aspartate 131.

It belongs to the HisA/HisF family. In terms of assembly, heterodimer of HisH and HisF.

It localises to the cytoplasm. It catalyses the reaction 5-[(5-phospho-1-deoxy-D-ribulos-1-ylimino)methylamino]-1-(5-phospho-beta-D-ribosyl)imidazole-4-carboxamide + L-glutamine = D-erythro-1-(imidazol-4-yl)glycerol 3-phosphate + 5-amino-1-(5-phospho-beta-D-ribosyl)imidazole-4-carboxamide + L-glutamate + H(+). It functions in the pathway amino-acid biosynthesis; L-histidine biosynthesis; L-histidine from 5-phospho-alpha-D-ribose 1-diphosphate: step 5/9. IGPS catalyzes the conversion of PRFAR and glutamine to IGP, AICAR and glutamate. The HisF subunit catalyzes the cyclization activity that produces IGP and AICAR from PRFAR using the ammonia provided by the HisH subunit. This is Imidazole glycerol phosphate synthase subunit HisF from Nocardia farcinica (strain IFM 10152).